The sequence spans 156 residues: Acyl carrier protein, mitochondrial (156 aa).

A mitochondrion-targeting transit peptide spans 1-68 (MAVRVLCACV…GRVTQLCRQY (68 aa)). One can recognise a Carrier domain in the interval 77-152 (EGIKDRVLYV…EIVDYIADKK (76 aa)). K88 carries the post-translational modification N6-acetyllysine. S112 carries the post-translational modification O-(pantetheine 4'-phosphoryl)serine.

As to quaternary structure, mammalian complex I is composed of 45 different subunits. Interacts with ETFRF1. Identified in a complex composed of MALSU1, MIEF1 upstream open reading frame protein and NDUFAB1; within the trimeric complex MIEF1 upstream open reading frame protein functions as a bridging scaffold that interacts with MALSU1 on one side, and with NDUFAB1 on the other side. The complex interacts with the mitochondrial large ribosomal subunit. Interacts with alpha-1-microglobulin chain; this interaction is required for the maintenance of mitochondrial redox homeostasis. Component of the mitochondrial core iron-sulfur cluster (ISC) complex composed of NFS1, LYRM4, NDUFAB1, ISCU, FXN, and FDX2; this complex is a heterohexamer containing two copies of each monomer. Component of the cyteine desulfurase complex composed of NFS1, LYRM4 and NDUFAB1; this complex contributes to the stability and cysteine desulfurase activity of NFS1. In terms of processing, phosphopantetheinylation at Ser-112 is essential for interactions with LYR motif-containing proteins.

Its subcellular location is the mitochondrion. Carrier of the growing fatty acid chain in fatty acid biosynthesis. Accessory and non-catalytic subunit of the mitochondrial membrane respiratory chain NADH dehydrogenase (Complex I), which functions in the transfer of electrons from NADH to the respiratory chain. Accessory protein, of the core iron-sulfur cluster (ISC) assembly complex, that regulates, in association with LYRM4, the stability and the cysteine desulfurase activity of NFS1 and participates in the [2Fe-2S] clusters assembly on the scaffolding protein ISCU. The core iron-sulfur cluster (ISC) assembly complex is involved in the de novo synthesis of a [2Fe-2S] cluster, the first step of the mitochondrial iron-sulfur protein biogenesis. This process is initiated by the cysteine desulfurase complex (NFS1:LYRM4:NDUFAB1) that produces persulfide which is delivered on the scaffold protein ISCU in a FXN-dependent manner. Then this complex is stabilized by FDX2 which provides reducing equivalents to accomplish the [2Fe-2S] cluster assembly. Finally, the [2Fe-2S] cluster is transferred from ISCU to chaperone proteins, including HSCB, HSPA9 and GLRX5. In Bos taurus (Bovine), this protein is Acyl carrier protein, mitochondrial.